The primary structure comprises 135 residues: Flagellar assembly factor FliW 2 (135 aa).

Belongs to the FliW family. As to quaternary structure, interacts with translational regulator CsrA and flagellin(s).

Its subcellular location is the cytoplasm. Acts as an anti-CsrA protein, binds CsrA and prevents it from repressing translation of its target genes, one of which is flagellin. Binds to flagellin and participates in the assembly of the flagellum. The chain is Flagellar assembly factor FliW 2 from Helicobacter acinonychis (strain Sheeba).